Here is a 139-residue protein sequence, read N- to C-terminus: uncharacterized protein (139 aa).

This is an uncharacterized protein from Caenorhabditis elegans.